The following is a 101-amino-acid chain: Therostasin (101 aa).

The N-terminal stretch at 1–19 is a signal peptide; that stretch reads MRGLAVLLLVACFCSVAFG. 2 Antistasin-like domains span residues 21 to 46 and 49 to 75; these read CENTECPRACPGEYEFDEDGCNTCLC and CNDAQCRIYCPLGFTTDANGCESFCTC.

In terms of tissue distribution, salivary glands.

Its subcellular location is the secreted. Functionally, potent inhibitor of factor Xa. It also inhibits trypsin in a weaker manner. This Theromyzon tessulatum (Duck leech) protein is Therostasin.